Consider the following 111-residue polypeptide: Ribosome-binding factor A (111 aa).

It belongs to the RbfA family. As to quaternary structure, monomer. Binds 30S ribosomal subunits, but not 50S ribosomal subunits or 70S ribosomes.

The protein localises to the cytoplasm. One of several proteins that assist in the late maturation steps of the functional core of the 30S ribosomal subunit. Associates with free 30S ribosomal subunits (but not with 30S subunits that are part of 70S ribosomes or polysomes). Required for efficient processing of 16S rRNA. May interact with the 5'-terminal helix region of 16S rRNA. The polypeptide is Ribosome-binding factor A (Helicobacter pylori (strain ATCC 700392 / 26695) (Campylobacter pylori)).